Reading from the N-terminus, the 314-residue chain is Putative S-adenosyl-L-methionine-dependent methyltransferase MAP_4191c (314 aa).

S-adenosyl-L-methionine is bound by residues Asp138 and 167 to 168 (DL).

It belongs to the UPF0677 family.

Functionally, exhibits S-adenosyl-L-methionine-dependent methyltransferase activity. The sequence is that of Putative S-adenosyl-L-methionine-dependent methyltransferase MAP_4191c from Mycolicibacterium paratuberculosis (strain ATCC BAA-968 / K-10) (Mycobacterium paratuberculosis).